Reading from the N-terminus, the 228-residue chain is PKHD-type hydroxylase XCV3086 (228 aa).

Residues 78-180 (RIYPPLFNRY…RVACFFWTQS (103 aa)) form the Fe2OG dioxygenase domain. 3 residues coordinate Fe cation: His-96, Asp-98, and His-161. Arg-171 is a binding site for 2-oxoglutarate.

Fe(2+) serves as cofactor. Requires L-ascorbate as cofactor.

The protein is PKHD-type hydroxylase XCV3086 of Xanthomonas euvesicatoria pv. vesicatoria (strain 85-10) (Xanthomonas campestris pv. vesicatoria).